We begin with the raw amino-acid sequence, 267 residues long: Phosphate import ATP-binding protein PstB 2 (267 aa).

The ABC transporter domain occupies Leu-21–Val-262. Gly-53–Ser-60 provides a ligand contact to ATP.

This sequence belongs to the ABC transporter superfamily. Phosphate importer (TC 3.A.1.7) family. The complex is composed of two ATP-binding proteins (PstB), two transmembrane proteins (PstC and PstA) and a solute-binding protein (PstS).

It localises to the cell membrane. The enzyme catalyses phosphate(out) + ATP + H2O = ADP + 2 phosphate(in) + H(+). In terms of biological role, part of the ABC transporter complex PstSACB involved in phosphate import. Responsible for energy coupling to the transport system. The sequence is that of Phosphate import ATP-binding protein PstB 2 from Streptococcus pyogenes serotype M18 (strain MGAS8232).